The primary structure comprises 241 residues: MSVCMPQKRYYRQRAHSNPMADHTFQYPVCPEQMDWSPLYPQYFPQQEEAGGAQVEFADIGCGYGGLLVQLSLLFPQQLILGLEIRVKVSDYVQDRIRSLRVAEPGRYQNIACLRSNAMKYLPNFFRKGQLSKMFFLFPDPHFKKTKHKWRIISPTLLAEYAYTLRIGGLVYTNTDVEEVHEWIVQHFSDHPLFSRVTEEQLADDIIVGHLGTCTEEGKKVQRNGGKNFLAVFRRVEDPQT.

Residues glycine 61, glutamate 84, arginine 86, asparagine 117, alanine 118, and leucine 137 each contribute to the S-adenosyl-L-methionine site. Aspartate 140 is an active-site residue. Positions 141–149 (PHFKKTKHK) are alphaC helix. Positions 215 and 217 each coordinate S-adenosyl-L-methionine. Positions 215-223 (TEEGKKVQR) are alpha6 helix.

It belongs to the class I-like SAM-binding methyltransferase superfamily. TrmB family. In terms of assembly, catalytic component of the METTL1-WDR4 complex, composed of mettl1 and wdr4.

The protein localises to the nucleus. It catalyses the reaction guanosine(46) in tRNA + S-adenosyl-L-methionine = N(7)-methylguanosine(46) in tRNA + S-adenosyl-L-homocysteine. The enzyme catalyses a guanosine in mRNA + S-adenosyl-L-methionine = an N(7)-methylguanosine in mRNA + S-adenosyl-L-homocysteine. The catalysed reaction is a guanosine in miRNA + S-adenosyl-L-methionine = an N(7)-methylguanosine in miRNA + S-adenosyl-L-homocysteine. Its pathway is tRNA modification; N(7)-methylguanine-tRNA biosynthesis. In terms of biological role, catalytic component of METTL1-WDR4 methyltransferase complex that mediates the formation of N(7)-methylguanine in a subset of RNA species, such as tRNAs, mRNAs and microRNAs (miRNAs). Catalyzes the formation of N(7)-methylguanine at position 46 (m7G46) in a large subset of tRNAs that contain the 5'-RAGGU-3' motif within the variable loop. M7G46 interacts with C13-G22 in the D-loop to stabilize tRNA tertiary structure and protect tRNAs from decay. Also acts as a methyltransferase for a subset of internal N(7)-methylguanine in mRNAs. Internal N(7)-methylguanine methylation of mRNAs in response to stress promotes their relocalization to stress granules, thereby suppressing their translation. Also methylates a specific subset of miRNAs. This is tRNA (guanine-N(7)-)-methyltransferase B (mettl1-B) from Xenopus tropicalis (Western clawed frog).